A 592-amino-acid polypeptide reads, in one-letter code: Proline--tRNA ligase (592 aa).

This sequence belongs to the class-II aminoacyl-tRNA synthetase family. ProS type 1 subfamily. As to quaternary structure, homodimer.

The protein resides in the cytoplasm. The catalysed reaction is tRNA(Pro) + L-proline + ATP = L-prolyl-tRNA(Pro) + AMP + diphosphate. In terms of biological role, catalyzes the attachment of proline to tRNA(Pro) in a two-step reaction: proline is first activated by ATP to form Pro-AMP and then transferred to the acceptor end of tRNA(Pro). As ProRS can inadvertently accommodate and process non-cognate amino acids such as alanine and cysteine, to avoid such errors it has two additional distinct editing activities against alanine. One activity is designated as 'pretransfer' editing and involves the tRNA(Pro)-independent hydrolysis of activated Ala-AMP. The other activity is designated 'posttransfer' editing and involves deacylation of mischarged Ala-tRNA(Pro). The misacylated Cys-tRNA(Pro) is not edited by ProRS. The chain is Proline--tRNA ligase from Corynebacterium urealyticum (strain ATCC 43042 / DSM 7109).